The sequence spans 55 residues: Large ribosomal subunit protein bL33 (55 aa).

The protein belongs to the bacterial ribosomal protein bL33 family.

This Enterobacter sp. (strain 638) protein is Large ribosomal subunit protein bL33.